Reading from the N-terminus, the 148-residue chain is Large-conductance mechanosensitive channel (148 aa).

Helical transmembrane passes span 16–36 and 89–109; these read VMDL…VNSI and GSFI…FLMV.

It belongs to the MscL family. In terms of assembly, homopentamer.

Its subcellular location is the cell inner membrane. Functionally, channel that opens in response to stretch forces in the membrane lipid bilayer. May participate in the regulation of osmotic pressure changes within the cell. In Paraburkholderia xenovorans (strain LB400), this protein is Large-conductance mechanosensitive channel.